The following is a 365-amino-acid chain: MSEDMEFENWGSTQSSVEKFCYKWTISNFSFCMGGIQRRITSPVFSSEENKEVAWCLRVYPKGADKESKDYLSVYLVLLSHLQIPVWAKFKFWIINSQGEKYQKIKSPTVECFLTNEQNGFKKFLPRDLLLSHRNCLLPEDQLTICCKVTILGRKYNMPSQNITPAIKDPRHLLTDDLGELWENSLFTDCCLLVAGHEFRAHKAILAARSPVFRAMFEHEMKESLKTPIKIHNLNPQVFKEMMGFIYTGKAPHLHSHSMACDVLPAADKYGLVSLKVLCEDALCRNLSVKNATHTLILADLHSTEKLKTQALDFIAYYASEVCETSEWKSILESHPHLVAEAFQSLASAQCSFLEPKVISGSNQL.

Positions 19–149 constitute an MATH domain; that stretch reads KFCYKWTISN…EDQLTICCKV (131 aa). One can recognise a BTB domain in the interval 188 to 250; the sequence is TDCCLLVAGH…EMMGFIYTGK (63 aa).

The protein belongs to the Tdpoz family.

This chain is TD and POZ domain-containing protein 1, found in Mus musculus (Mouse).